Here is a 684-residue protein sequence, read N- to C-terminus: Leishmanolysin-like peptidase (684 aa).

His-257 is a Zn(2+) binding site. Residue Glu-258 is part of the active site. The Zn(2+) site is built by His-261 and His-364.

Belongs to the peptidase M8 family. The cofactor is Zn(2+).

It is found in the cytoplasm. Its function is as follows. Essential for the coordination of mitotic progression, and also plays a role in cell migration. This chain is Leishmanolysin-like peptidase, found in Drosophila pseudoobscura pseudoobscura (Fruit fly).